A 314-amino-acid chain; its full sequence is Mitochondrial MRF1 N(5)-glutamine methyltransferase MTQ1 (314 aa).

S-adenosyl-L-methionine-binding positions include 118–122 (FTGTG), Asp-141, and Asn-188. 188–191 (NPPY) provides a ligand contact to substrate.

Belongs to the protein N5-glutamine methyltransferase family.

The protein resides in the mitochondrion. It catalyses the reaction L-glutaminyl-[peptide chain release factor] + S-adenosyl-L-methionine = N(5)-methyl-L-glutaminyl-[peptide chain release factor] + S-adenosyl-L-homocysteine + H(+). In terms of biological role, methylates MRF1 on 'Gln-287' using S-adenosyl L-methionine as methyl donor. The sequence is that of Mitochondrial MRF1 N(5)-glutamine methyltransferase MTQ1 (MTQ1) from Saccharomyces cerevisiae (strain ATCC 204508 / S288c) (Baker's yeast).